Here is a 62-residue protein sequence, read N- to C-terminus: Large ribosomal subunit protein bL28 (62 aa).

Belongs to the bacterial ribosomal protein bL28 family.

In Acidothermus cellulolyticus (strain ATCC 43068 / DSM 8971 / 11B), this protein is Large ribosomal subunit protein bL28.